The sequence spans 85 residues: MKAVILSLVAAFLYSGYTLNCRKCDETVCQLYWTCTEAETLCYILKNKTDTMGLQAIQGCAETCPVPEPDQEVKCCKTDYCNSYF.

The first 18 residues, 1–18 (MKAVILSLVAAFLYSGYT), serve as a signal peptide directing secretion. 5 disulfides stabilise this stretch: Cys21–Cys42, Cys24–Cys29, Cys35–Cys60, Cys64–Cys75, and Cys76–Cys81.

It belongs to the three-finger toxin family. Ancestral subfamily. In terms of tissue distribution, expressed by the venom gland.

Its subcellular location is the secreted. The polypeptide is Probable weak neurotoxin 3FTx-Lio1 (Erythrolamprus poecilogyrus (Water snake)).